Reading from the N-terminus, the 566-residue chain is MAQVKAEYDFQSQPNTGELSISAGEVLTVIRENIDGGWIEGRNVRGSVGLFPESYVTPYQASRPPPVLPPPLPPTSSGPPAASSRPFDDWGGASEVAAPPSYGAQHHHQPTPSVPEVTRSSYPSQNDDFDDEWTDEDDEQEPTRPNVQSSIGSNSRRDLSRSHSEHGGPDRGSNKVNKNINRFSNFVKSGVEAYVIGESKTTSQISERHEVVMNNGIIQWKPIQQYYTCIVDKPKKESKLKGLKSFIAYSITSSLTNIQRQVSRRYKHFDWLHEQLSAKYVLIPIPPLPEKQVAGRYEEDLIDHRKHILQLWVNKICRHPVLSQSEVWLHFISCTDEKDWKNGKRRAEKDEYIGGAFLNCITVPHQPLDPNNVDMQVERFQRSVKTSEEAMRVMQERMNMFQKVFAGPVKQNWQKMGSAFKTLQQSFEIDETVASRRLTEALAYTASEYHEIGQVFDAHTKNDMEPVLENLYSYKGTVQNVPDIIQVHKQAVQKFRDSEGRLSSAEAEKMKQRIDAMSYTVIAEVQHQTAEKVEDMKSTMGTYLKKQAMFYQEVATKLTSLAARYD.

Residues 1–61 (MAQVKAEYDF…PESYVTPYQA (61 aa)) form the SH3 domain. The disordered stretch occupies residues 59-179 (YQASRPPPVL…DRGSNKVNKN (121 aa)). The span at 63–77 (RPPPVLPPPLPPTSS) shows a compositional bias: pro residues. The span at 127–140 (DDFDDEWTDEDDEQ) shows a compositional bias: acidic residues. The segment covering 143–154 (TRPNVQSSIGSN) has biased composition (polar residues). Positions 155 to 173 (SRRDLSRSHSEHGGPDRGS) are enriched in basic and acidic residues. Positions 227-339 (YTCIVDKPKK…HFISCTDEKD (113 aa)) constitute a PX domain. Residues 362–566 (TVPHQPLDPN…KLTSLAARYD (205 aa)) form the BAR domain.

This sequence belongs to the sorting nexin family. In terms of assembly, homodimer. Isoform d interacts (via SH3 domain) with dyn-1. In terms of tissue distribution, expressed in vulval precursor cells (VPCs) and apoptotic germ cells. Colocalizes with actin, dyn-1 and rab-5 in early phagosomes.

It is found in the cytoplasm. It localises to the cytoplasmic vesicle. The protein localises to the phagosome membrane. Its function is as follows. Involved in the signaling of vulval development by acting as a negative regulator of epidermal growth factor receptor (EGFR) signaling. Aids in phagosomal membrane tubule formation which is required for phagosomal fusion with endosomes and lysosomes. Also recruits rab-7 to phagosomes by an interaction with dyn-1. These are events leading to phagosome maturation which is a step in apoptotic cell corpse clearance. Binds phosphatidylinositol-3,4,5-trisphosphate. The sequence is that of Sorting nexin lst-4 from Caenorhabditis elegans.